The sequence spans 315 residues: Replication factor C small subunit (315 aa).

Residue 43–50 coordinates ATP; it reads GSPGVGKT.

It belongs to the activator 1 small subunits family. RfcS subfamily. As to quaternary structure, heteromultimer composed of small subunits (RfcS) and large subunits (RfcL).

Part of the RFC clamp loader complex which loads the PCNA sliding clamp onto DNA. In Methanococcus maripaludis (strain DSM 14266 / JCM 13030 / NBRC 101832 / S2 / LL), this protein is Replication factor C small subunit.